Reading from the N-terminus, the 320-residue chain is Nicotianamine synthase 1 (320 aa).

It belongs to the nicotianamine synthase (NAS)-like family. As to expression, in shoots and roots.

It catalyses the reaction 3 S-adenosyl-L-methionine = nicotianamine + 3 S-methyl-5'-thioadenosine + 3 H(+). Functionally, synthesizes nicotianamine, a polyamine which serves as a sensor for the physiological iron status within the plant, and/or might be involved in the transport of iron. The sequence is that of Nicotianamine synthase 1 (NAS1) from Arabidopsis thaliana (Mouse-ear cress).